The sequence spans 243 residues: UDP-2,3-diacylglucosamine hydrolase (243 aa).

Positions 9, 11, 42, 79, and 114 each coordinate Mn(2+). Residue asparagine 79–arginine 80 participates in substrate binding. The substrate site is built by aspartate 122, serine 160, asparagine 164, and histidine 195. Residues histidine 195 and histidine 197 each coordinate Mn(2+).

The protein belongs to the LpxH family. The cofactor is Mn(2+).

Its subcellular location is the cell inner membrane. The enzyme catalyses UDP-2-N,3-O-bis[(3R)-3-hydroxytetradecanoyl]-alpha-D-glucosamine + H2O = 2-N,3-O-bis[(3R)-3-hydroxytetradecanoyl]-alpha-D-glucosaminyl 1-phosphate + UMP + 2 H(+). It participates in glycolipid biosynthesis; lipid IV(A) biosynthesis; lipid IV(A) from (3R)-3-hydroxytetradecanoyl-[acyl-carrier-protein] and UDP-N-acetyl-alpha-D-glucosamine: step 4/6. Hydrolyzes the pyrophosphate bond of UDP-2,3-diacylglucosamine to yield 2,3-diacylglucosamine 1-phosphate (lipid X) and UMP by catalyzing the attack of water at the alpha-P atom. Involved in the biosynthesis of lipid A, a phosphorylated glycolipid that anchors the lipopolysaccharide to the outer membrane of the cell. The protein is UDP-2,3-diacylglucosamine hydrolase of Coxiella burnetii (strain RSA 331 / Henzerling II).